The chain runs to 22 residues: Plasticin-TR (22 aa).

The protein belongs to the frog skin active peptide (FSAP) family. Plasticin subfamily. In terms of assembly, exhibits a propensity to self-association and forms helical oligomers in membrane-mimetic environments. As to expression, expressed by the skin glands.

The protein resides in the secreted. It localises to the target cell membrane. Its function is as follows. Has no antimicrobial activity against Gram-negative bacterium E.coli ATCC 25922, Gram-positive bacterium S.epidermidis ATCC 12228 and against fungus C.albicans ATCC 24433 at concentrations up to 100 uM. Has an anti-inflammatory effect, since it inhibits the production of the pro-inflammatory cytokines TNF-alpha and IL-1 beta. Has high activity of stimulation of insulin release, which may protect the species from being eaten by predators by causing fatal hypoglycemia. Is not cytotoxic to cancer line cells. Does not show hemolysis on mouse erythrocytes. Adopts a mixture of alpha-helical and beta-sheet structures. This is Plasticin-TR from Phyllomedusa trinitatis (Trinidad leaf frog).